Here is a 284-residue protein sequence, read N- to C-terminus: NAD kinase (284 aa).

The active-site Proton acceptor is the D70. NAD(+) is bound by residues D70–G71, N139–E140, K167, D169, L177, T180–S185, and Q236.

The protein belongs to the NAD kinase family. It depends on a divalent metal cation as a cofactor.

The protein localises to the cytoplasm. The enzyme catalyses NAD(+) + ATP = ADP + NADP(+) + H(+). In terms of biological role, involved in the regulation of the intracellular balance of NAD and NADP, and is a key enzyme in the biosynthesis of NADP. Catalyzes specifically the phosphorylation on 2'-hydroxyl of the adenosine moiety of NAD to yield NADP. The polypeptide is NAD kinase (Helicobacter pylori (strain J99 / ATCC 700824) (Campylobacter pylori J99)).